A 192-amino-acid chain; its full sequence is Large ribosomal subunit protein uL5 (192 aa).

This sequence belongs to the universal ribosomal protein uL5 family. In terms of assembly, part of the 50S ribosomal subunit; part of the 5S rRNA/L5/L18/L25 subcomplex. Contacts the 5S rRNA and the P site tRNA. Forms a bridge to the 30S subunit in the 70S ribosome.

In terms of biological role, this is one of the proteins that bind and probably mediate the attachment of the 5S RNA into the large ribosomal subunit, where it forms part of the central protuberance. In the 70S ribosome it contacts protein S13 of the 30S subunit (bridge B1b), connecting the 2 subunits; this bridge is implicated in subunit movement. Contacts the P site tRNA; the 5S rRNA and some of its associated proteins might help stabilize positioning of ribosome-bound tRNAs. This chain is Large ribosomal subunit protein uL5, found in Zymomonas mobilis subsp. mobilis (strain ATCC 31821 / ZM4 / CP4).